Here is an 813-residue protein sequence, read N- to C-terminus: G-type lectin S-receptor-like serine/threonine-protein kinase LECRK1 (813 aa).

Residues 1–19 (MVALLLFPMLLQLLSPTCA) form the signal peptide. Over 20 to 466 (QTQKNITLGS…NRKHWVLGSS (447 aa)) the chain is Extracellular. Residues 22 to 149 (QKNITLGSTL…DGTTKWQTFD (128 aa)) enclose the Bulb-type lectin domain. 6 N-linked (GlcNAc...) asparagine glycosylation sites follow: N24, N57, N164, N168, N219, and N242. An EGF-like; atypical domain is found at 293–346 (PQNICHAIVSDVGSGVCGFNSYCTFDGTRNQIASCQCPPWYKFFDEQKKYKGCK). 5 disulfides stabilise this stretch: C297–C315, C309–C327, C329–C345, C391–C413, and C395–C401. The 80-residue stretch at 354–433 (CDLDEATALA…NMADYVQRTV (80 aa)) folds into the PAN domain. N-linked (GlcNAc...) asparagine glycosylation is found at N407 and N441. A helical membrane pass occupies residues 467–487 (LILGTSILVNFALISIFLFGT). Topologically, residues 488-813 (YCRIATKKNI…DPCSFISSLP (326 aa)) are cytoplasmic. The region spanning 523-797 (AGFHEILGAG…KVTQMLDGAV (275 aa)) is the Protein kinase domain. Residues 529 to 537 (LGAGASGVV) and K553 contribute to the ATP site. The active-site Proton acceptor is D647.

It belongs to the protein kinase superfamily. Ser/Thr protein kinase family.

The protein resides in the membrane. The catalysed reaction is L-seryl-[protein] + ATP = O-phospho-L-seryl-[protein] + ADP + H(+). It catalyses the reaction L-threonyl-[protein] + ATP = O-phospho-L-threonyl-[protein] + ADP + H(+). Involved in innate immunity. Required for the expression of defense-related genes PR1A, LOX2 and CHS1 upon biotic stresses. Required for basal resistance to the fungal blast (M.grisea), bacterial blight (X.oryzae pv. oryzae, Xoo) and the herbivorous insect brown planthopper (N.lugens, BPH). May be involved in several defense signaling pathways. Involved in the promotion of seed germination. Required for the expression of alpha-amylase genes during seed germination. Involved in resistance against the herbivorous insect brown planthopper (N.lugens, BPH). Member of the BPH3 (BPH resistance locus 3) cluster which contains LECRK1, LECRK2 and LECRK3. This is G-type lectin S-receptor-like serine/threonine-protein kinase LECRK1 from Oryza sativa subsp. japonica (Rice).